Consider the following 94-residue polypeptide: MVKLRLKRCGRKQRAIYRIVAIDVRSRREGRDLQKVGFYDPIKNQTYSNVPAILYFLEKGAQPTETVYDILRKTEFFKEFRISFDKKRKEKQES.

This sequence belongs to the bacterial ribosomal protein bS16 family.

Its subcellular location is the plastid. It is found in the chloroplast. This Phalaenopsis aphrodite subsp. formosana (Moth orchid) protein is Small ribosomal subunit protein bS16c.